A 221-amino-acid polypeptide reads, in one-letter code: Adenylate kinase (221 aa).

10–15 (GAGKGT) is a binding site for ATP. The NMP stretch occupies residues 30-59 (STGDMLRAAVKARTELGVAAKKIMDAGGLV). AMP contacts are provided by residues Thr31, Arg36, 57 to 59 (GLV), 85 to 88 (GFPR), and Gln92. Residues 122-159 (GRRVHLASGRTYHIKFNPPKVEGKDDITGDPLIQRDDD) are LID. ATP-binding positions include Arg123 and 132 to 133 (TY). Arg156 and Arg167 together coordinate AMP. Ser207 contributes to the ATP binding site.

Belongs to the adenylate kinase family. In terms of assembly, monomer.

The protein localises to the cytoplasm. The catalysed reaction is AMP + ATP = 2 ADP. It functions in the pathway purine metabolism; AMP biosynthesis via salvage pathway; AMP from ADP: step 1/1. Catalyzes the reversible transfer of the terminal phosphate group between ATP and AMP. Plays an important role in cellular energy homeostasis and in adenine nucleotide metabolism. The protein is Adenylate kinase of Polynucleobacter necessarius subsp. necessarius (strain STIR1).